A 163-amino-acid chain; its full sequence is Neurotrophin-3 (163 aa).

Positions 1 to 3 (IQS) are cleaved as a signal peptide. Residues 4–119 (SSMDQGILTE…VLNRTSRRKR (116 aa)) constitute a propeptide that is removed on maturation. The interval 36–61 (QTARTKDGMQTTVKKTEAEADARASQ) is disordered. Over residues 49 to 61 (KKTEAEADARASQ) the composition is skewed to basic and acidic residues. The N-linked (GlcNAc...) asparagine glycan is linked to Asn-112.

The protein belongs to the NGF-beta family.

Its subcellular location is the secreted. Functionally, seems to promote the survival of visceral and proprioceptive sensory neurons. This chain is Neurotrophin-3 (NTF3), found in Boa constrictor (Boa).